The primary structure comprises 296 residues: Farnesyl diphosphate synthase (296 aa).

Isopentenyl diphosphate contacts are provided by Lys46, Arg49, and His78. 2 residues coordinate Mg(2+): Asp85 and Asp91. Residue Arg96 participates in (2E)-geranyl diphosphate binding. Arg97 provides a ligand contact to isopentenyl diphosphate. Positions 182, 183, 220, and 237 each coordinate (2E)-geranyl diphosphate.

This sequence belongs to the FPP/GGPP synthase family. The cofactor is Mg(2+).

The protein localises to the cytoplasm. It carries out the reaction isopentenyl diphosphate + (2E)-geranyl diphosphate = (2E,6E)-farnesyl diphosphate + diphosphate. The protein is Farnesyl diphosphate synthase (ispA) of Bacillus subtilis (strain 168).